The primary structure comprises 438 residues: Protein maelstrom 1 (438 aa).

The HMG box DNA-binding region spans 2–69 (APKKRNGFMT…LERTAKKERL (68 aa)). A disordered region spans residues 374–438 (KEMGSRDLSP…NMGAGKKIAR (65 aa)). Positions 381-391 (LSPSSSHQSVS) are enriched in polar residues.

This sequence belongs to the maelstrom family.

It is found in the cytoplasm. It localises to the nucleus. Functionally, involved both in the piRNA and miRNA metabolic processes. As a component of the meiotic nuage, plays a central role during oogenesis by repressing transposable elements and preventing their mobilization, which is essential for the germline integrity. Repression of transposable elements is mediated via the piRNA metabolic process, which mediates the repression of transposable elements during meiosis by forming complexes composed of piRNAs and Piwi proteins and governs the repression of transposons. As a nuclear component, it is required for proper differentiation in the germline stem cell (GSC) lineage by repressing microRNA-7 (miR-7), thereby acting as an indirect regulator of bag-of-marbles (Bam). Acts by binding to the promoter of miR-7 gene and repressing its expression; miR-7 repression alleviates the Bam repression by miR-7, thereby allowing differentiation in the germline stem cell (GSC) lineage. The protein is Protein maelstrom 1 (mael1) of Drosophila persimilis (Fruit fly).